The primary structure comprises 343 residues: Protease HtpX homolog (343 aa).

The next 2 membrane-spanning stretches (helical) occupy residues 7–24 (TMLL…GYLV) and 29–46 (GMVV…FSYW). H130 is a Zn(2+) binding site. E131 is an active-site residue. H134 contributes to the Zn(2+) binding site. A run of 2 helical transmembrane segments spans residues 145–165 (LTAT…LMGM) and 177–197 (GAGM…AMLV). Residue E206 participates in Zn(2+) binding. The tract at residues 308-343 (NLEDEDLNPEAQNGFTHNQKKKTVRRGKDRPTWLRH) is disordered. Over residues 325-335 (NQKKKTVRRGK) the composition is skewed to basic residues.

The protein belongs to the peptidase M48B family. Requires Zn(2+) as cofactor.

It localises to the cell inner membrane. The polypeptide is Protease HtpX homolog (Bartonella bacilliformis (strain ATCC 35685 / KC583 / Herrer 020/F12,63)).